Here is a 207-residue protein sequence, read N- to C-terminus: Large ribosomal subunit protein uL4 (207 aa).

Residues 49 to 78 (HAVKNRSAVSGGGRKPWRQKGTGRARQGSI) are disordered.

Belongs to the universal ribosomal protein uL4 family. Part of the 50S ribosomal subunit.

One of the primary rRNA binding proteins, this protein initially binds near the 5'-end of the 23S rRNA. It is important during the early stages of 50S assembly. It makes multiple contacts with different domains of the 23S rRNA in the assembled 50S subunit and ribosome. Functionally, forms part of the polypeptide exit tunnel. The protein is Large ribosomal subunit protein uL4 of Streptococcus gordonii (strain Challis / ATCC 35105 / BCRC 15272 / CH1 / DL1 / V288).